The primary structure comprises 463 residues: uncharacterized protein (463 aa).

Residues 12–70 (LWQQGSVVELTITGLNHQGEGIGRFNERVVFVPDTAPGDRLEVRLVKVKRNYALAQLLK) enclose the TRAM domain. Positions 83, 89, 92, and 171 each coordinate [4Fe-4S] cluster. The S-adenosyl-L-methionine site is built by glutamine 295, tyrosine 324, glutamate 345, and aspartate 390. Catalysis depends on cysteine 417, which acts as the Nucleophile.

This sequence belongs to the class I-like SAM-binding methyltransferase superfamily. RNA M5U methyltransferase family.

This is an uncharacterized protein from Synechocystis sp. (strain ATCC 27184 / PCC 6803 / Kazusa).